We begin with the raw amino-acid sequence, 237 residues long: Early nodulin-like protein 1 (237 aa).

Residues 1 to 28 (MEASRRWPYAAWFMAVLGLVAVFSSSEA) form the signal peptide. Residues 29-134 (YVFYAGGRDG…GQKLYIIVMA (106 aa)) form the Phytocyanin domain. Residue Asn59 is glycosylated (N-linked (GlcNAc...) asparagine). Cys85 and Cys122 are joined by a disulfide. The tract at residues 139–215 (KPSEAPEPAG…SLGAPPPTSG (77 aa)) is disordered. 2 stretches are compositionally biased toward low complexity: residues 140-152 (PSEA…AAGP) and 201-215 (MSRS…PTSG). Ser206 is lipidated: GPI-anchor amidated serine. A propeptide spans 207 to 237 (LGAPPPTSGAAGLAGVVASVVVGVLGALLMF) (removed in mature form).

It belongs to the early nodulin-like (ENODL) family. In terms of tissue distribution, expressed ubiquitously. Accumulates particularly in reproductive tissues, especially in maturing seeds.

Its subcellular location is the vacuole. The protein localises to the aleurone grain membrane. Its function is as follows. May act as a carbohydrate transporter. The chain is Early nodulin-like protein 1 from Oryza sativa subsp. japonica (Rice).